The following is a 322-amino-acid chain: 1-aminocyclopropane-1-carboxylate oxidase 1 (322 aa).

Residues 159-259 (PTFGTKVSSY…RMSIASFYNP (101 aa)) enclose the Fe2OG dioxygenase domain. His-183, Asp-185, and His-240 together coordinate Fe cation.

The protein belongs to the iron/ascorbate-dependent oxidoreductase family. The cofactor is Fe cation.

The enzyme catalyses 1-aminocyclopropane-1-carboxylate + L-ascorbate + O2 = ethene + L-dehydroascorbate + hydrogen cyanide + CO2 + 2 H2O. The protein operates within alkene biosynthesis; ethylene biosynthesis via S-adenosyl-L-methionine; ethylene from S-adenosyl-L-methionine: step 2/2. The sequence is that of 1-aminocyclopropane-1-carboxylate oxidase 1 (ACO1) from Oryza sativa subsp. japonica (Rice).